The sequence spans 152 residues: UPF0178 protein Shewmr7_1635 (152 aa).

This sequence belongs to the UPF0178 family.

This chain is UPF0178 protein Shewmr7_1635, found in Shewanella sp. (strain MR-7).